Consider the following 217-residue polypeptide: Large ribosomal subunit protein uL4 (217 aa).

The tract at residues K46 to T103 is disordered.

It belongs to the universal ribosomal protein uL4 family. In terms of assembly, part of the 50S ribosomal subunit.

One of the primary rRNA binding proteins, this protein initially binds near the 5'-end of the 23S rRNA. It is important during the early stages of 50S assembly. It makes multiple contacts with different domains of the 23S rRNA in the assembled 50S subunit and ribosome. Functionally, forms part of the polypeptide exit tunnel. The chain is Large ribosomal subunit protein uL4 from Corynebacterium jeikeium (strain K411).